A 127-amino-acid chain; its full sequence is Fluoride-specific ion channel FluC (127 aa).

4 helical membrane-spanning segments follow: residues 4 to 24, 35 to 55, 71 to 91, and 103 to 123; these read TLLAVFIGGGVGSVARWQLGV, LGTLLANLIGAFVIGGALAFF, TGLCGGLTTFSTFSAEVIMFL, and VLLNLAGSLLMTALAFALVTW. Na(+)-binding residues include Gly75 and Thr78.

Belongs to the fluoride channel Fluc/FEX (TC 1.A.43) family.

It localises to the cell inner membrane. It carries out the reaction fluoride(in) = fluoride(out). Na(+) is not transported, but it plays an essential structural role and its presence is essential for fluoride channel function. Fluoride-specific ion channel. Important for reducing fluoride concentration in the cell, thus reducing its toxicity. The chain is Fluoride-specific ion channel FluC from Pectobacterium carotovorum subsp. carotovorum (strain PC1).